The primary structure comprises 497 residues: Sestrin homolog (497 aa).

Ser-185 and Ser-190 each carry phosphoserine. Polar residues predominate over residues 226 to 241 (NANPDYDSQTAASSNG). Positions 226–255 (NANPDYDSQTAASSNGGAPPDSANAVADGP) are disordered.

This sequence belongs to the sestrin family. In terms of assembly, associates with the GATOR2 complex; the interaction is probably direct. Associates with the GATOR1 complex; the interaction is probably indirect and mediated by the GATOR2 complex. In terms of tissue distribution, highly expressed in muscle-enriched tissues (at protein level).

It is found in the nucleus. It localises to the cytoplasm. Its function is as follows. Functions as a negative feedback regulator of mTOR function. The protein is Sestrin homolog of Drosophila melanogaster (Fruit fly).